A 122-amino-acid chain; its full sequence is Large ribosomal subunit protein uL14 (122 aa).

This sequence belongs to the universal ribosomal protein uL14 family. As to quaternary structure, part of the 50S ribosomal subunit. Forms a cluster with proteins L3 and L19. In the 70S ribosome, L14 and L19 interact and together make contacts with the 16S rRNA in bridges B5 and B8.

In terms of biological role, binds to 23S rRNA. Forms part of two intersubunit bridges in the 70S ribosome. The sequence is that of Large ribosomal subunit protein uL14 from Petrotoga mobilis (strain DSM 10674 / SJ95).